A 761-amino-acid polypeptide reads, in one-letter code: Phosphoribosylformylglycinamidine synthase subunit PurL (761 aa).

The active site involves histidine 58. 2 residues coordinate ATP: tyrosine 61 and lysine 105. Glutamate 107 is a binding site for Mg(2+). Substrate is bound by residues 108 to 111 (SHNH) and arginine 130. Histidine 109 (proton acceptor) is an active-site residue. Aspartate 131 contacts Mg(2+). Glutamine 259 contacts substrate. Aspartate 287 lines the Mg(2+) pocket. Substrate is bound at residue 331 to 333 (ESQ). ATP-binding residues include asparagine 519 and glycine 556. Asparagine 557 contacts Mg(2+). Serine 559 contributes to the substrate binding site.

Belongs to the FGAMS family. In terms of assembly, monomer. Part of the FGAM synthase complex composed of 1 PurL, 1 PurQ and 2 PurS subunits.

The protein resides in the cytoplasm. The catalysed reaction is N(2)-formyl-N(1)-(5-phospho-beta-D-ribosyl)glycinamide + L-glutamine + ATP + H2O = 2-formamido-N(1)-(5-O-phospho-beta-D-ribosyl)acetamidine + L-glutamate + ADP + phosphate + H(+). The protein operates within purine metabolism; IMP biosynthesis via de novo pathway; 5-amino-1-(5-phospho-D-ribosyl)imidazole from N(2)-formyl-N(1)-(5-phospho-D-ribosyl)glycinamide: step 1/2. Part of the phosphoribosylformylglycinamidine synthase complex involved in the purines biosynthetic pathway. Catalyzes the ATP-dependent conversion of formylglycinamide ribonucleotide (FGAR) and glutamine to yield formylglycinamidine ribonucleotide (FGAM) and glutamate. The FGAM synthase complex is composed of three subunits. PurQ produces an ammonia molecule by converting glutamine to glutamate. PurL transfers the ammonia molecule to FGAR to form FGAM in an ATP-dependent manner. PurS interacts with PurQ and PurL and is thought to assist in the transfer of the ammonia molecule from PurQ to PurL. This chain is Phosphoribosylformylglycinamidine synthase subunit PurL, found in Rhodococcus jostii (strain RHA1).